A 380-amino-acid chain; its full sequence is Cytochrome b (380 aa).

The next 4 membrane-spanning stretches (helical) occupy residues 33–53 (FGSL…FLAM), 77–98 (WLIR…YLHI), 113–133 (WNIG…GYVL), and 178–198 (FFAF…LHFF). Residues histidine 83 and histidine 97 each coordinate heme b. Positions 182 and 196 each coordinate heme b. Position 201 (histidine 201) interacts with a ubiquinone. A run of 4 helical transmembrane segments spans residues 226 to 246 (YKDL…SFFS), 288 to 308 (LGGV…PILH), 320 to 340 (LTQL…WIGG), and 347 to 367 (FIAV…ILIP).

It belongs to the cytochrome b family. The cytochrome bc1 complex contains 3 respiratory subunits (MT-CYB, CYC1 and UQCRFS1), 2 core proteins (UQCRC1 and UQCRC2) and probably 6 low-molecular weight proteins. It depends on heme b as a cofactor.

It localises to the mitochondrion inner membrane. In terms of biological role, component of the ubiquinol-cytochrome c reductase complex (complex III or cytochrome b-c1 complex) that is part of the mitochondrial respiratory chain. The b-c1 complex mediates electron transfer from ubiquinol to cytochrome c. Contributes to the generation of a proton gradient across the mitochondrial membrane that is then used for ATP synthesis. The polypeptide is Cytochrome b (mt-cyb) (Zenopsis nebulosa (Mirror dory)).